Reading from the N-terminus, the 245-residue chain is NAD-dependent protein deacetylase (245 aa).

The Deacetylase sirtuin-type domain maps to Met1–Lys245. Positions 26, 30, 37, 38, 105, 107, 108, and 123 each coordinate NAD(+). Phe37 lines the nicotinamide pocket. Ile107 and Asp108 together coordinate nicotinamide. His123 serves as the catalytic Proton acceptor. 4 residues coordinate Zn(2+): Cys131, Cys134, Cys151, and Cys154. Thr190, Ser191, Asn216, and Ile234 together coordinate NAD(+).

It belongs to the sirtuin family. Class U subfamily. Requires Zn(2+) as cofactor.

The protein localises to the cytoplasm. The enzyme catalyses N(6)-acetyl-L-lysyl-[protein] + NAD(+) + H2O = 2''-O-acetyl-ADP-D-ribose + nicotinamide + L-lysyl-[protein]. Its function is as follows. NAD-dependent protein deacetylase which modulates the activities of several enzymes which are inactive in their acetylated form. This chain is NAD-dependent protein deacetylase, found in Bacillus cereus (strain ZK / E33L).